The following is a 389-amino-acid chain: tRNA-specific 2-thiouridylase MnmA (389 aa).

Residues 35–42 (GMSGGVDS) and Met61 contribute to the ATP site. The interval 121 to 123 (NPD) is interaction with target base in tRNA. The active-site Nucleophile is Cys126. Cys126 and Cys223 form a disulfide bridge. ATP is bound at residue Gly151. Positions 173–175 (KDQ) are interaction with tRNA. Residue Cys223 is the Cysteine persulfide intermediate of the active site. The interaction with tRNA stretch occupies residues 335-336 (RY).

Belongs to the MnmA/TRMU family.

The protein localises to the cytoplasm. The catalysed reaction is S-sulfanyl-L-cysteinyl-[protein] + uridine(34) in tRNA + AH2 + ATP = 2-thiouridine(34) in tRNA + L-cysteinyl-[protein] + A + AMP + diphosphate + H(+). Functionally, catalyzes the 2-thiolation of uridine at the wobble position (U34) of tRNA, leading to the formation of s(2)U34. The protein is tRNA-specific 2-thiouridylase MnmA of Actinobacillus pleuropneumoniae serotype 5b (strain L20).